The following is a 177-amino-acid chain: Cell division inhibitor SulA (177 aa).

Residues A112 to Y118 are ftsZ binding. The lon protease binding stretch occupies residues K170 to H177.

It belongs to the SulA family. In terms of assembly, interacts with FtsZ. Is rapidly cleaved and degraded by the Lon protease once DNA damage is repaired.

Functionally, component of the SOS system and an inhibitor of cell division. Accumulation of SulA causes rapid cessation of cell division and the appearance of long, non-septate filaments. In the presence of GTP, binds a polymerization-competent form of FtsZ in a 1:1 ratio, thus inhibiting FtsZ polymerization and therefore preventing it from participating in the assembly of the Z ring. This mechanism prevents the premature segregation of damaged DNA to daughter cells during cell division. The sequence is that of Cell division inhibitor SulA from Photorhabdus laumondii subsp. laumondii (strain DSM 15139 / CIP 105565 / TT01) (Photorhabdus luminescens subsp. laumondii).